The chain runs to 199 residues: Pyrrolidone-carboxylate peptidase (199 aa).

Active-site residues include glutamate 80, cysteine 142, and histidine 166.

This sequence belongs to the peptidase C15 family. As to quaternary structure, homotetramer.

Its subcellular location is the cytoplasm. It carries out the reaction Release of an N-terminal pyroglutamyl group from a polypeptide, the second amino acid generally not being Pro.. Removes 5-oxoproline from various penultimate amino acid residues except L-proline. The polypeptide is Pyrrolidone-carboxylate peptidase (Oceanobacillus iheyensis (strain DSM 14371 / CIP 107618 / JCM 11309 / KCTC 3954 / HTE831)).